Consider the following 1058-residue polypeptide: Ubiquitin-like modifier-activating enzyme 1 (1058 aa).

Residues methionine 1–glutamate 47 form a disordered region. The residue at position 2 (serine 2) is an N-acetylserine. At serine 2 the chain carries N-acetylalanine. At serine 4 the chain carries Phosphoserine. Residues proline 5 to arginine 11 carry the Nuclear localization signal motif. Phosphoserine occurs at positions 13, 21, 24, and 46. A compositionally biased stretch (polar residues) spans serine 21–leucine 30. Tyrosine 55 is modified (phosphotyrosine). 2 tandem repeats follow at residues glycine 63–phenylalanine 199 and glycine 459–isoleucine 611. Residues glycine 63 to isoleucine 611 are 2 approximate repeats. Residues alanine 478, aspartate 504, arginine 515, lysine 528, and aspartate 576–asparagine 577 contribute to the ATP site. At lysine 528 the chain carries N6-succinyllysine. The Glycyl thioester intermediate role is filled by cysteine 632. Lysine 671 bears the N6-acetyllysine mark. Threonine 800 is modified (phosphothreonine). Phosphoserine is present on residues serine 810, serine 816, serine 820, and serine 835. The residue at position 980 (lysine 980) is an N6-acetyllysine.

It belongs to the ubiquitin-activating E1 family. As to quaternary structure, monomer. Interacts with GAN (via BTB domain). In terms of processing, ISGylated. In terms of tissue distribution, detected in erythrocytes (at protein level). Ubiquitous.

Its subcellular location is the cytoplasm. The protein resides in the mitochondrion. It localises to the nucleus. It catalyses the reaction ATP + ubiquitin + [E1 ubiquitin-activating enzyme]-L-cysteine = AMP + diphosphate + S-ubiquitinyl-[E1 ubiquitin-activating enzyme]-L-cysteine.. The protein operates within protein modification; protein ubiquitination. Its function is as follows. Catalyzes the first step in ubiquitin conjugation to mark cellular proteins for degradation through the ubiquitin-proteasome system. Activates ubiquitin by first adenylating its C-terminal glycine residue with ATP, and thereafter linking this residue to the side chain of a cysteine residue in E1, yielding a ubiquitin-E1 thioester and free AMP. Essential for the formation of radiation-induced foci, timely DNA repair and for response to replication stress. Promotes the recruitment of TP53BP1 and BRCA1 at DNA damage sites. In Homo sapiens (Human), this protein is Ubiquitin-like modifier-activating enzyme 1 (UBA1).